Here is a 190-residue protein sequence, read N- to C-terminus: Small ribosomal subunit protein uS5 (190 aa).

The S5 DRBM domain occupies F21–V84. Residues K156 to A190 form a disordered region. Basic and acidic residues predominate over residues K171–A182.

The protein belongs to the universal ribosomal protein uS5 family. Part of the 30S ribosomal subunit. Contacts proteins S4 and S8.

Its function is as follows. With S4 and S12 plays an important role in translational accuracy. Functionally, located at the back of the 30S subunit body where it stabilizes the conformation of the head with respect to the body. The sequence is that of Small ribosomal subunit protein uS5 from Ruegeria pomeroyi (strain ATCC 700808 / DSM 15171 / DSS-3) (Silicibacter pomeroyi).